We begin with the raw amino-acid sequence, 416 residues long: Phosphoglycerate kinase (416 aa).

Valine 22, aspartate 23, phenylalanine 24, asparagine 25, glutamine 37, arginine 38, serine 61, histidine 62, glycine 64, arginine 65, leucine 120, arginine 121, histidine 168, and arginine 169 together coordinate (2R)-3-phosphoglycerate. Residue glycine 212 coordinates ADP. Glycine 212 is a CDP binding site. Alanine 213 and lysine 214 together coordinate AMP. An ATP-binding site is contributed by alanine 213. Residue alanine 213 participates in Mg(2+) binding. Aspartate 217 contributes to the CDP binding site. Aspartate 217 contributes to the Mg(2+) binding site. An AMP-binding site is contributed by lysine 218. Lysine 218 contributes to the ATP binding site. Glycine 236 lines the ADP pocket. CDP is bound at residue glycine 236. 2 residues coordinate AMP: glycine 237 and glycine 311. 2 residues coordinate ATP: glycine 237 and glycine 311. Residues glycine 336 and phenylalanine 341 each contribute to the CDP site. Phenylalanine 341 is an ADP binding site. Glutamate 342 contacts AMP. ATP is bound by residues glutamate 342, aspartate 373, and threonine 374. Aspartate 373 contributes to the Mg(2+) binding site.

Belongs to the phosphoglycerate kinase family. Monomer. The cofactor is Mg(2+). As to expression, expressed in all cells of the worm (at protein level), higher expression in the cells associated with the tubercles (tegumental modifications), the muscle and along the tegument.

It carries out the reaction (2R)-3-phosphoglycerate + ATP = (2R)-3-phospho-glyceroyl phosphate + ADP. Its pathway is carbohydrate degradation; glycolysis; pyruvate from D-glyceraldehyde 3-phosphate: step 2/5. Involved in the seventh step in glycolysis. Catalyzes the conversion of 1,3-bisphosphoglycerate ((2R)-3-phospho-glyceroyl phosphate) to 3-phosphoglycerate ((2R)-3-phosphoglycerate) and results in the formation of ATP. Associated with the tegument to provide the energy needed for the tegumental repair resulting from immune damage. The polypeptide is Phosphoglycerate kinase (PGK) (Schistosoma mansoni (Blood fluke)).